The following is a 322-amino-acid chain: MIKAGIIGGAGYTAGELIRLLINHPETEIVFINSTSNAGNKITDVHEGLYGECDLAFTDELPLEDIDVLFFCTAHGDTKKFMESHNIPEELKIIDLSMDYRIASPDHDFIYGLPELNRRATCTAKHVANPGCFATCIQLGLLPLAKHLMLNEDVMVNAITGSTGAGVKPGATSHFSWRNNNMSVYKAFEHQHVPEIKQSLKQLQNSFDAEIDFIPYRGDFPRGIFATLVVKTKVALEEIVRMYEEYYAKDSFVHIVDKNIDLKQVVNTNKCLIHLEKHGDKLLIISCIDNLLKGASGQAVHNMNLMFNLEETVGLRLKPSAF.

Residue Cys132 is part of the active site.

Belongs to the NAGSA dehydrogenase family. Type 1 subfamily.

Its subcellular location is the cytoplasm. The catalysed reaction is N-acetyl-L-glutamate 5-semialdehyde + phosphate + NADP(+) = N-acetyl-L-glutamyl 5-phosphate + NADPH + H(+). It functions in the pathway amino-acid biosynthesis; L-arginine biosynthesis; N(2)-acetyl-L-ornithine from L-glutamate: step 3/4. Its function is as follows. Catalyzes the NADPH-dependent reduction of N-acetyl-5-glutamyl phosphate to yield N-acetyl-L-glutamate 5-semialdehyde. The polypeptide is N-acetyl-gamma-glutamyl-phosphate reductase (Bacteroides fragilis (strain ATCC 25285 / DSM 2151 / CCUG 4856 / JCM 11019 / LMG 10263 / NCTC 9343 / Onslow / VPI 2553 / EN-2)).